The sequence spans 96 residues: ESAT-6-like protein EsxR (96 aa).

This sequence belongs to the WXG100 family. ESAT-6 subfamily.

The protein resides in the secreted. This Mycobacterium bovis (strain ATCC BAA-935 / AF2122/97) protein is ESAT-6-like protein EsxR.